Reading from the N-terminus, the 1359-residue chain is Transcriptional regulator ATRX homolog (1359 aa).

Residues 1–402 (MRVGVSESED…RAEKERRKRL (402 aa)) are disordered. The segment covering 11–49 (SDGHVIEDEDLEMARQIENERKEKRAQKLKEKREREGKP) has biased composition (basic and acidic residues). Over residues 50 to 61 (PPKKRPAKKRKA) the composition is skewed to basic residues. A compositionally biased stretch (acidic residues) spans 64–73 (SEEDDDDEEE). Composition is skewed to basic residues over residues 77-86 (KSSKKSRKRA), 103-123 (KSKS…KKRT), 139-149 (KSKKKSKKTKK), 165-177 (VKKS…KSVK), 194-204 (KKSKKGLKKKA), and 219-229 (KKSKKKSKKVV). Acidic residues predominate over residues 257–271 (ESSESEKSDEEEEEK). A compositionally biased stretch (basic and acidic residues) spans 321–336 (KDQKSESEASDVEEKV). A compositionally biased stretch (low complexity) spans 347–357 (SESGSDSSEGS). Residues 362–376 (RKSKKKEKPEKKKKG) show a composition bias toward basic residues. Positions 383–397 (KLQKETIDAERAEKE) are enriched in basic and acidic residues. The Helicase ATP-binding domain maps to 483–685 (DRLDTEGSGG…HCMVNFVKPG (203 aa)). Residue 496–503 (HCMGLGKT) coordinates ATP. The DEAH box motif lies at 636 to 639 (DEAH). The disordered stretch occupies residues 809-891 (RVMREDAEEE…NSDDEDEEDG (83 aa)). The span at 814-832 (DAEEEADFIDDGDGSESES) shows a compositional bias: acidic residues. The span at 833–847 (EGSFKSGSESDSGKS) shows a compositional bias: low complexity. The Helicase C-terminal domain maps to 951-1134 (LLVEIIKKCE…EAQIQRHYLG (184 aa)).

It belongs to the SNF2/RAD54 helicase family.

The protein localises to the nucleus. The catalysed reaction is ATP + H2O = ADP + phosphate + H(+). Functionally, required for embryonic development and gonadogenesis. Also, functions redundantly with the transcriptional repressor lin-35 to regulate somatic gonad development. The sequence is that of Transcriptional regulator ATRX homolog from Caenorhabditis elegans.